Consider the following 821-residue polypeptide: Ent-pimara-8(14),15-diene synthase (821 aa).

Mg(2+)-binding residues include D556, D560, N701, T705, and E709. The short motif at 556-560 (DDFFD) is the DDXXD motif element.

This sequence belongs to the terpene synthase family. It depends on Mg(2+) as a cofactor. As to expression, highly expressed in roots, at intermediate levels in stems and at lower levels in leaves.

It carries out the reaction ent-copalyl diphosphate = ent-pimara-8(14),15-diene + diphosphate. It participates in secondary metabolite biosynthesis; terpenoid biosynthesis. Involved in the biosynthesis of ent-kaurene diterpenoids natural products. Catalyzes the conversion of ent-copalyl diphosphate to ent-pimara-8(14),15-diene. This is Ent-pimara-8(14),15-diene synthase from Oryza sativa subsp. japonica (Rice).